The primary structure comprises 118 residues: MICOS complex subunit MIC13 (118 aa).

The Mitochondrial matrix segment spans residues 1–7 (MVARVWS). Residues 8-26 (LMRFLIKGSVAGGAVYLVY) form a helical membrane-spanning segment. At 27–118 (DQELLGPSDK…GWEYVKARTK (92 aa)) the chain is on the mitochondrial intermembrane side.

The protein belongs to the MICOS complex subunit Mic13 family. In terms of assembly, component of the mitochondrial contact site and cristae organizing system (MICOS) complex, composed of at least MICOS10/MIC10, CHCHD3/MIC19, CHCHD6/MIC25, APOO/MIC26, MICOS13/MIC13, APOOL/MIC27 and IMMT/MIC60. The MICOS complex associates with mitochondrial outer membrane proteins SAMM50, MTX1 and MTX2 (together described as components of the mitochondrial outer membrane sorting assembly machinery (SAM) complex) and DNAJC11, mitochondrial inner membrane protein TMEM11 and with HSPA9. The MICOS and SAM complexes together with DNAJC11 are part of a large protein complex spanning both membranes termed the mitochondrial intermembrane space bridging (MIB) complex.

It localises to the mitochondrion inner membrane. In terms of biological role, component of the MICOS complex, a large protein complex of the mitochondrial inner membrane that plays crucial roles in the maintenance of crista junctions, inner membrane architecture, and formation of contact sites to the outer membrane. Constituent of mature MICOS complex, it is required for the formation of cristae junction (CJ) and maintenance of cristae morphology. Required for the incorporation of MICOS10/MIC10 into the MICOS complex. The polypeptide is MICOS complex subunit MIC13 (Homo sapiens (Human)).